An 89-amino-acid polypeptide reads, in one-letter code: Small ribosomal subunit protein uS15 (89 aa).

It belongs to the universal ribosomal protein uS15 family. In terms of assembly, part of the 30S ribosomal subunit. Forms a bridge to the 50S subunit in the 70S ribosome, contacting the 23S rRNA.

Functionally, one of the primary rRNA binding proteins, it binds directly to 16S rRNA where it helps nucleate assembly of the platform of the 30S subunit by binding and bridging several RNA helices of the 16S rRNA. Forms an intersubunit bridge (bridge B4) with the 23S rRNA of the 50S subunit in the ribosome. The sequence is that of Small ribosomal subunit protein uS15 from Photorhabdus laumondii subsp. laumondii (strain DSM 15139 / CIP 105565 / TT01) (Photorhabdus luminescens subsp. laumondii).